The chain runs to 622 residues: Condensin-2 complex subunit H2 (622 aa).

A Phosphothreonine modification is found at threonine 19. Phosphoserine occurs at positions 95, 199, 223, and 227. The interval tryptophan 207–alanine 354 is disordered. Low complexity predominate over residues alanine 262–valine 273. Position 282 is a phosphoserine (serine 282). The segment covering threonine 294–proline 312 has biased composition (basic and acidic residues).

This sequence belongs to the CND2 H2 (condensin-2 subunit 2) family. As to quaternary structure, component of the condensin-2 complex, which contains the SMC2 and SMC4 heterodimer, and three non SMC subunits, NCAPG2, NCAPH2 and NCAPD3 that probably regulate the complex.

The protein localises to the nucleus. Functionally, regulatory subunit of the condensin-2 complex, a complex that seems to provide chromosomes with an additional level of organization and rigidity and in establishing mitotic chromosome architecture. May promote the resolution of double-strand DNA catenanes (intertwines) between sister chromatids. Condensin-mediated compaction likely increases tension in catenated sister chromatids, providing directionality for type II topoisomerase-mediated strand exchanges toward chromatid decatenation. Required for decatenation of chromatin bridges at anaphase. Early in neurogenesis, may play an essential role to ensure accurate mitotic chromosome condensation in neuron stem cells, ultimately affecting neuron pool and cortex size. Seems to have lineage-specific role in T-cell development. The polypeptide is Condensin-2 complex subunit H2 (NCAPH2) (Bos taurus (Bovine)).